The primary structure comprises 173 residues: Adenine phosphoribosyltransferase (173 aa).

The protein belongs to the purine/pyrimidine phosphoribosyltransferase family. Homodimer.

The protein localises to the cytoplasm. The catalysed reaction is AMP + diphosphate = 5-phospho-alpha-D-ribose 1-diphosphate + adenine. It participates in purine metabolism; AMP biosynthesis via salvage pathway; AMP from adenine: step 1/1. Catalyzes a salvage reaction resulting in the formation of AMP, that is energically less costly than de novo synthesis. This Petrotoga mobilis (strain DSM 10674 / SJ95) protein is Adenine phosphoribosyltransferase.